The following is a 235-amino-acid chain: Glucosamine-6-phosphate deaminase (235 aa).

Asp62 (proton acceptor; for enolization step) is an active-site residue. The For ring-opening step role is filled by Asn128. His130 functions as the Proton acceptor; for ring-opening step in the catalytic mechanism. The For ring-opening step role is filled by Glu135.

Belongs to the glucosamine/galactosamine-6-phosphate isomerase family. NagB subfamily.

The enzyme catalyses alpha-D-glucosamine 6-phosphate + H2O = beta-D-fructose 6-phosphate + NH4(+). The protein operates within amino-sugar metabolism; N-acetylneuraminate degradation; D-fructose 6-phosphate from N-acetylneuraminate: step 5/5. In terms of biological role, catalyzes the reversible isomerization-deamination of glucosamine 6-phosphate (GlcN6P) to form fructose 6-phosphate (Fru6P) and ammonium ion. The sequence is that of Glucosamine-6-phosphate deaminase from Latilactobacillus sakei subsp. sakei (strain 23K) (Lactobacillus sakei subsp. sakei).